A 241-amino-acid chain; its full sequence is Glutathione S-transferase omega-1 (241 aa).

Ser-2 is subject to N-acetylserine. A GST N-terminal domain is found at 22–101 (GLIRVYSMRF…YLDEAYPGKK (80 aa)). Residue Cys-32 is the Nucleophile of the active site. The residue at position 57 (Lys-57) is an N6-acetyllysine. Glutathione-binding positions include Lys-59, Val-72, and 85-86 (ES). The GST C-terminal domain occupies 106 to 225 (DPYEKACQKM…HIEPRDLRAF (120 aa)). Lys-143, Lys-148, and Lys-152 each carry N6-acetyllysine.

Homodimer. As to expression, most abundant in the liver and skeletal muscle; also expressed in heart, diaphragm, colon, thymus, kidney, lung, ovaries, spleen, intestine and pancreas.

It is found in the cytoplasm. The protein localises to the cytosol. It carries out the reaction RX + glutathione = an S-substituted glutathione + a halide anion + H(+). It catalyses the reaction L-dehydroascorbate + 2 glutathione = glutathione disulfide + L-ascorbate. The catalysed reaction is methylarsonate + 2 glutathione + H(+) = methylarsonous acid + glutathione disulfide + H2O. Its function is as follows. Exhibits glutathione-dependent thiol transferase and dehydroascorbate reductase activities. Has S-(phenacyl)glutathione reductase activity. Also has glutathione S-transferase activity. Participates in the biotransformation of inorganic arsenic and reduces monomethylarsonic acid (MMA) and dimethylarsonic acid. The protein is Glutathione S-transferase omega-1 (GSTO1) of Sus scrofa (Pig).